A 268-amino-acid chain; its full sequence is Norsolorinic acid ketoreductase nor1 (268 aa).

Residues I32, D79, N108, Y182, K186, V213, and T215 each contribute to the NADP(+) site. Y182 functions as the Proton donor in the catalytic mechanism. K186 acts as the Lowers pKa of active site Tyr in catalysis.

This sequence belongs to the short-chain dehydrogenases/reductases (SDR) family.

The protein localises to the cytoplasm. Its subcellular location is the cytosol. It localises to the vacuole. The enzyme catalyses (1'S)-averantin + NADP(+) = norsolorinic acid + NADPH + H(+). The protein operates within mycotoxin biosynthesis. Its function is as follows. Norsolorinic acid ketoreductase; part of the fragmented gene cluster that mediates the biosynthesis of dothistromin (DOTH), a polyketide toxin very similar in structure to the aflatoxin precursor, versicolorin B. The first step of the pathway is the conversion of acetate to norsolorinic acid (NOR) and requires the fatty acid synthase subunits hexA and hexB, as well as the polyketide synthase pksA. PksA combines a hexanoyl starter unit and 7 malonyl-CoA extender units to synthesize the precursor NOR. The hexanoyl starter unit is provided to the acyl-carrier protein (ACP) domain by the fungal fatty acid synthase hexA/hexB. The second step is the conversion of NOR to averantin (AVN) and requires the norsolorinic acid ketoreductase nor1, which catalyzes the dehydration of norsolorinic acid to form (1'S)-averantin. The cytochrome P450 monooxygenase avnA then catalyzes the hydroxylation of AVN to 5'hydroxyaverantin (HAVN). The next step is performed by adhA that transforms HAVN to averufin (AVF). Averufin might then be converted to hydroxyversicolorone by cypX and avfA. Hydroxyversicolorone is further converted versiconal hemiacetal acetate (VHA) by moxY. VHA is then the substrate for the versiconal hemiacetal acetate esterase est1 to yield versiconal (VAL). Versicolorin B synthase vbsA then converts VAL to versicolorin B (VERB) by closing the bisfuran ring. Then, the activity of the versicolorin B desaturase verB leads to versicolorin A (VERA). DotB, a predicted chloroperoxidase, may perform epoxidation of the A-ring of VERA. Alternatively, a cytochrome P450, such as cypX or avnA could catalyze this step. It is also possible that another, uncharacterized, cytochrome P450 enzyme is responsible for this step. Opening of the epoxide could potentially be achieved by the epoxide hydrolase epoA. However, epoA seems not to be required for DOTH biosynthesis, but other epoxide hydrolases may have the ability to complement this hydrolysis. Alternatively, opening of the epoxide ring could be achieved non-enzymatically. The next step is the deoxygenation of ring A to yield the 5,8-dihydroxyanthraquinone which is most likely catalyzed by the NADPH dehydrogenase encoded by ver1. The last stages of DOTH biosynthesis are proposed to involve hydroxylation of the bisfuran. OrdB and norB might have oxidative roles here. An alternative possibility is that cytochrome P450 monoogenases such as avnA and cypX might perform these steps in addition to previously proposed steps. This is Norsolorinic acid ketoreductase nor1 from Dothistroma septosporum (strain NZE10 / CBS 128990) (Red band needle blight fungus).